Reading from the N-terminus, the 310-residue chain is NADH-cytochrome b5 reductase 1 (310 aa).

Residues 30–50 (WVPFAVALAAGFVAWKLSVGG) form a helical membrane-spanning segment. Residues 61–166 (NEFQNFVLKE…RGPKGAMVYT (106 aa)) form the FAD-binding FR-type domain. Residues 146–160 (TTLKVGDTMKVRGPK) and 172–209 (HIGMIAGGTGITPMLQIIKAIIRNRPRNGGNDTTQVDL) each bind FAD.

This sequence belongs to the flavoprotein pyridine nucleotide cytochrome reductase family. Monomer. Component of the 2-(3-amino-3-carboxypropyl)histidine synthase complex composed of dph1, dph2, dph3 and a NADH-dependent reductase, predominantly cbr1. The cofactor is FAD.

The protein localises to the mitochondrion outer membrane. The catalysed reaction is 2 Fe(III)-[cytochrome b5] + NADH = 2 Fe(II)-[cytochrome b5] + NAD(+) + H(+). It catalyses the reaction 2 Fe(3+)-[Dph3] + NADH = 2 Fe(2+)-[Dph3] + NAD(+) + H(+). It participates in protein modification; peptidyl-diphthamide biosynthesis. In terms of biological role, NADH-dependent reductase for dph3 and cytochrome b5. Required for the first step of diphthamide biosynthesis, a post-translational modification of histidine which occurs in elongation factor 2. Dph1 and dph2 transfer a 3-amino-3-carboxypropyl (ACP) group from S-adenosyl-L-methionine (SAM) to a histidine residue, the reaction is assisted by a reduction system comprising dph3 and a NADH-dependent reductase, predominantly cbr1. By reducing dph3, also involved in the formation of the tRNA wobble base modification mcm5s 2U (5-methoxycarbonylmethyl-2-thiouridine), mediated by the elongator complex. The cytochrome b5/NADH cytochrome b5 reductase electron transfer system supports the catalytic activity of several sterol biosynthetic enzymes. This is NADH-cytochrome b5 reductase 1 (cbr1) from Emericella nidulans (strain FGSC A4 / ATCC 38163 / CBS 112.46 / NRRL 194 / M139) (Aspergillus nidulans).